Here is a 448-residue protein sequence, read N- to C-terminus: Glutamate--tRNA ligase 1 (448 aa).

The 'HIGH' region motif lies at 10–20; that stretch reads PSPTGMLHVGN. Positions 240–244 match the 'KMSKS' region motif; that stretch reads KISKR. ATP is bound at residue Lys-243.

It belongs to the class-I aminoacyl-tRNA synthetase family. Glutamate--tRNA ligase type 1 subfamily. As to quaternary structure, monomer.

The protein localises to the cytoplasm. The enzyme catalyses tRNA(Glu) + L-glutamate + ATP = L-glutamyl-tRNA(Glu) + AMP + diphosphate. Catalyzes the attachment of glutamate to tRNA(Glu) in a two-step reaction: glutamate is first activated by ATP to form Glu-AMP and then transferred to the acceptor end of tRNA(Glu). The chain is Glutamate--tRNA ligase 1 from Rickettsia typhi (strain ATCC VR-144 / Wilmington).